Reading from the N-terminus, the 130-residue chain is Small ribosomal subunit protein uS9 (130 aa).

Residues 105-130 (TRDSRMKERKKPGLKGARRAPQFSKR) are disordered. The span at 111–130 (KERKKPGLKGARRAPQFSKR) shows a compositional bias: basic residues.

It belongs to the universal ribosomal protein uS9 family.

The sequence is that of Small ribosomal subunit protein uS9 from Listeria welshimeri serovar 6b (strain ATCC 35897 / DSM 20650 / CCUG 15529 / CIP 8149 / NCTC 11857 / SLCC 5334 / V8).